The chain runs to 74 residues: Neuropeptide-like protein 33 (74 aa).

The signal sequence occupies residues 1-21 (MISTSLLLVVLLFAILAIVDA). Tyrosine amide is present on Tyr72.

The protein belongs to the YARP (YGGW-amide related peptide) family. In terms of tissue distribution, expressed in hypoderm.

It localises to the secreted. May have antifungic activity against D.coniospora. In Caenorhabditis elegans, this protein is Neuropeptide-like protein 33 (nlp-33).